We begin with the raw amino-acid sequence, 212 residues long: Imidazole glycerol phosphate synthase subunit HisH (212 aa).

The 210-residue stretch at 3–212 folds into the Glutamine amidotransferase type-1 domain; that stretch reads SIAVVDYGMG…LLSNFLKWTP (210 aa). Cys82 serves as the catalytic Nucleophile. Residues His192 and Glu194 contribute to the active site.

Heterodimer of HisH and HisF.

It localises to the cytoplasm. It catalyses the reaction 5-[(5-phospho-1-deoxy-D-ribulos-1-ylimino)methylamino]-1-(5-phospho-beta-D-ribosyl)imidazole-4-carboxamide + L-glutamine = D-erythro-1-(imidazol-4-yl)glycerol 3-phosphate + 5-amino-1-(5-phospho-beta-D-ribosyl)imidazole-4-carboxamide + L-glutamate + H(+). The enzyme catalyses L-glutamine + H2O = L-glutamate + NH4(+). It functions in the pathway amino-acid biosynthesis; L-histidine biosynthesis; L-histidine from 5-phospho-alpha-D-ribose 1-diphosphate: step 5/9. IGPS catalyzes the conversion of PRFAR and glutamine to IGP, AICAR and glutamate. The HisH subunit catalyzes the hydrolysis of glutamine to glutamate and ammonia as part of the synthesis of IGP and AICAR. The resulting ammonia molecule is channeled to the active site of HisF. In Nitrosomonas europaea (strain ATCC 19718 / CIP 103999 / KCTC 2705 / NBRC 14298), this protein is Imidazole glycerol phosphate synthase subunit HisH.